Reading from the N-terminus, the 66-residue chain is MLKNLKDLTLEDMKVKRLTLKKEYMDLRFKTVVGHVENPLKKRELRRDIARLNTIIHEYAIGIRKV.

It belongs to the universal ribosomal protein uL29 family.

The chain is Large ribosomal subunit protein uL29 from Borrelia recurrentis (strain A1).